The following is a 247-amino-acid chain: 2,3-bisphosphoglycerate-dependent phosphoglycerate mutase (247 aa).

Substrate contacts are provided by residues 8-15 (RHGESQWN), 21-22 (TG), arginine 60, 87-90 (ERHY), lysine 98, 114-115 (RR), and 183-184 (GN). The active-site Tele-phosphohistidine intermediate is histidine 9. Catalysis depends on glutamate 87, which acts as the Proton donor/acceptor.

This sequence belongs to the phosphoglycerate mutase family. BPG-dependent PGAM subfamily.

The catalysed reaction is (2R)-2-phosphoglycerate = (2R)-3-phosphoglycerate. Its pathway is carbohydrate degradation; glycolysis; pyruvate from D-glyceraldehyde 3-phosphate: step 3/5. In terms of biological role, catalyzes the interconversion of 2-phosphoglycerate and 3-phosphoglycerate. The chain is 2,3-bisphosphoglycerate-dependent phosphoglycerate mutase from Chlorobium phaeobacteroides (strain DSM 266 / SMG 266 / 2430).